Here is a 510-residue protein sequence, read N- to C-terminus: MSCGLNDVNVSTISLQMALWRPNESKVYLPPTPVSKVISTDVYVTRTNVYYHGGSSRLLTVGHPYYSIKKSNNKVAVPKVSGYQYRVFHVKLPDPNKFGLPDADLYDPDTQRLLWACVGVEVGRGQPLGVGVSGHPYYNRLDDTENAHTPDTADDGRENISMDYKQTQLFILGCKPPIGEHWSKGTTCNGSSAAGDCPPLQFTNTTIEDGDMVETGFGALDFATLQSNKSDVPLDICTNTCKYPDYLKMAAEPYGDSMFFSLRREQMFTRHFFNLGGKMGDTIPDELYIKSTSVPTPGSHVYTSTPSGSMVSSEQQLFNKPYWLRRAQGHNNGMCWGNRVFLTVVDTTRSTNVSLCATEASDTNYKATNFKEYLRHMEEYDLQFIFQLCKITLTPEIMAYIHNMDPQLLEDWNFGVPPPPSASLQDTYRYLQSQAITCQKPTPPKTPTDPYASLTFWDVDLSESFSMDLDQFPLGRKFLLQRGAMPTVSRKRAAVSGTTPPTSKRKRVRR.

The segment at 489–510 is disordered; that stretch reads SRKRAAVSGTTPPTSKRKRVRR.

Belongs to the papillomaviridae L1 protein family. In terms of assembly, self-assembles into homopentamers. The capsid has an icosahedral symmetry and consists of 72 capsomers, with each capsomer being a pentamer of L1. Interacts with the minor capsid protein L2; this interaction is necessary for viral genome encapsidation. Interacts with protein E2; this interaction enhances E2-dependent replication and transcription activation.

Its subcellular location is the virion. It is found in the host nucleus. Functionally, forms an icosahedral capsid with a T=7 symmetry and a 50 nm diameter. The capsid is composed of 72 pentamers linked to each other by disulfide bonds and associated with L2 proteins. Binds to heparan sulfate proteoglycans on cell surface of basal layer keratinocytes to provide initial virion attachment. This binding mediates a conformational change in the virus capsid that facilitates efficient infection. The virion enters the host cell via endocytosis. During virus trafficking, L1 protein dissociates from the viral DNA and the genomic DNA is released to the host nucleus. The virion assembly takes place within the cell nucleus. Encapsulates the genomic DNA together with protein L2. The chain is Major capsid protein L1 from Homo sapiens (Human).